The following is a 259-amino-acid chain: UPF0246 protein PA14_18590 (259 aa).

The protein belongs to the UPF0246 family.

This Pseudomonas aeruginosa (strain UCBPP-PA14) protein is UPF0246 protein PA14_18590.